The following is a 463-amino-acid chain: Asparagine--tRNA ligase (463 aa).

The protein belongs to the class-II aminoacyl-tRNA synthetase family. Homodimer.

Its subcellular location is the cytoplasm. The enzyme catalyses tRNA(Asn) + L-asparagine + ATP = L-asparaginyl-tRNA(Asn) + AMP + diphosphate + H(+). The chain is Asparagine--tRNA ligase from Alkaliphilus metalliredigens (strain QYMF).